The sequence spans 63 residues: Small ribosomal subunit protein eS17 (63 aa).

This sequence belongs to the eukaryotic ribosomal protein eS17 family.

In Methanococcus maripaludis (strain C7 / ATCC BAA-1331), this protein is Small ribosomal subunit protein eS17.